The chain runs to 555 residues: Urocanate hydratase (555 aa).

NAD(+)-binding positions include 51–52 (GG), glutamine 129, 175–177 (GMG), glutamate 195, 262–266 (QTSAH), 272–273 (YL), and tyrosine 321. Cysteine 409 is an active-site residue. Glycine 491 contacts NAD(+).

Belongs to the urocanase family. NAD(+) is required as a cofactor.

The protein localises to the cytoplasm. It carries out the reaction 4-imidazolone-5-propanoate = trans-urocanate + H2O. The protein operates within amino-acid degradation; L-histidine degradation into L-glutamate; N-formimidoyl-L-glutamate from L-histidine: step 2/3. Its function is as follows. Catalyzes the conversion of urocanate to 4-imidazolone-5-propionate. The protein is Urocanate hydratase of Xanthomonas axonopodis pv. citri (strain 306).